The primary structure comprises 318 residues: MDARSDLHHYNPYRVFSRAEWASMREDTPMTLDAAEVAALRSMHDRLDLSEVEEIYLPMSRLLSIHVAAMQQLYYAQRRFLGVVERKMPFIIGVAGSVAVGKSTTARVLQALLARWSPRPTVDLVTTDGFLHPNAVLERAGLMQKKGFPESYDLPALLGFLSDIKSGRRKVKAPIYSHLTYDIVPNKFTVIDRPDILIVEGVNVLQTGRLPRDGKAVPVVSDFFDFSVYLDADEPVLRDWYVRRFLALRDTAFHDPRSYFHRYAVLSDEEATATAIAIWERTNLANLEDNILPTRPRATLILKKGADHVVDSVALRRL.

96-103 is an ATP binding site; that stretch reads GSVAVGKS.

Belongs to the prokaryotic pantothenate kinase family.

The protein resides in the cytoplasm. It carries out the reaction (R)-pantothenate + ATP = (R)-4'-phosphopantothenate + ADP + H(+). The protein operates within cofactor biosynthesis; coenzyme A biosynthesis; CoA from (R)-pantothenate: step 1/5. The sequence is that of Pantothenate kinase from Rhodopseudomonas palustris (strain ATCC BAA-98 / CGA009).